Consider the following 372-residue polypeptide: Homoserine dehydrogenase (372 aa).

NAD(+) is bound by residues Val-13, Gly-15, Val-16, and Thr-99. NADP(+)-binding residues include Val-16 and Thr-99. Val-16, Thr-99, Ser-100, and Lys-123 together coordinate NADPH. Lys-123 serves as a coordination point for NADP(+). Na(+) contacts are provided by Glu-150, Val-153, Ala-155, and Leu-157. The NADP(+) site is built by Gly-216 and Glu-219. L-homoserine is bound by residues Glu-219 and Asp-230. The active-site Proton donor is Lys-234. NAD(+) is bound at residue Gly-352. Residue Gly-352 coordinates NADP(+). Residue Gly-352 coordinates NADPH.

This sequence belongs to the homoserine dehydrogenase family. Homodimer. It depends on a metal cation as a cofactor.

It carries out the reaction L-homoserine + NADP(+) = L-aspartate 4-semialdehyde + NADPH + H(+). The enzyme catalyses L-homoserine + NAD(+) = L-aspartate 4-semialdehyde + NADH + H(+). The protein operates within amino-acid biosynthesis; L-methionine biosynthesis via de novo pathway; L-homoserine from L-aspartate: step 3/3. It participates in amino-acid biosynthesis; L-threonine biosynthesis; L-threonine from L-aspartate: step 3/5. In terms of biological role, catalyzes the conversion of L-aspartate-beta-semialdehyde (L-Asa) to L-homoserine (L-Hse), the third step in the biosynthesis of amino acids that derive from aspartate (the aspartate family of amino acids), including methioinine and threonine, the latter of which is a precursor to isoleucine; production of homoserine leads to a branch-point in the pathway as it can either be O-phosphorylated for processing to threonine, or O-acylated for processing to methionine. This is Homoserine dehydrogenase from Paracoccidioides brasiliensis (strain Pb18).